The following is a 395-amino-acid chain: G-protein coupled receptor 182 (395 aa).

At 1 to 53 (MSVIPSSRPVSTLAPDNDFREIHNWTELLHLFNQTFSDCHMELNENTKQVVLF) the chain is on the extracellular side. Asn24 and Asn33 each carry an N-linked (GlcNAc...) asparagine glycan. Residues 54-75 (VFYLAIFVVGLVENVLVICVNC) form a helical membrane-spanning segment. The Cytoplasmic segment spans residues 76 to 86 (RRSGRVGMLNL). The helical transmembrane segment at 87 to 109 (YILNMAVADLGIILSLPVWMLEV) threads the bilayer. Residues 110–123 (MLEYTWLWGSFSCR) lie on the Extracellular side of the membrane. Cysteines 122 and 198 form a disulfide. Residues 124–145 (FIHYFYLANMYSSIFFLTCLSI) traverse the membrane as a helical segment. Over 146 to 166 (DRYVTLTNTSPSWQRHQHRIR) the chain is Cytoplasmic. Residues 167-189 (RAVCAGVWVLSAIIPLPEVVHIQ) traverse the membrane as a helical segment. At 190 to 213 (LLDGSEPMCLFLAPFETYSAWALA) the chain is on the extracellular side. The chain crosses the membrane as a helical span at residues 214–235 (VALSATILGFLLPFPLIAVFNI). Residues 236–254 (LSACRLRRQGQTESRRHCL) lie on the Cytoplasmic side of the membrane. Residues 255–276 (LMWAYIVVFVICWLPYHVTMLL) form a helical membrane-spanning segment. At 277-295 (LTLHTTHIFLHCNLVNFLY) the chain is on the extracellular side. The helical transmembrane segment at 296-316 (FFYEIIDCFSMLHCVANPILY) threads the bilayer. Over 317 to 395 (NFLSPSFRGR…RTPHLHSAIP (79 aa)) the chain is Cytoplasmic. Ser329 bears the Phosphoserine mark.

This sequence belongs to the G-protein coupled receptor 1 family. In terms of tissue distribution, expressed in a wide variety of peripheral tissues in the adult rat with prominent expression in lung, testis, adrenal and liver.

The protein resides in the cell membrane. In terms of biological role, orphan receptor. The chain is G-protein coupled receptor 182 (Gpr182) from Rattus norvegicus (Rat).